The primary structure comprises 286 residues: MSKDILNRYLFDNADVRGQIVQLEKSYQEILSAHTYPEAIARLLGELMAATSLLTATLKFDGDISVQVQGNGPVSLAVINGNNLQQLRGVARWEGEVAKDASLQQLMGQGHMVITLTPNNGERYQGVVALEKETLAECLEQYFLQSEQLPTAIRLFANGKQAAGMLLQVLPGEDEHNEEFEHLEQLTSTIKAEELFELEATEVLHRLYHQEEVRLFDPIEVTFSCTCSRERSGQALKTVAKEELDAILAEQGKIEMGCEYCNSSYSFDSIDIEALFKNAPKADTQQ.

Intrachain disulfides connect cysteine 225-cysteine 227 and cysteine 258-cysteine 261.

This sequence belongs to the HSP33 family. Post-translationally, under oxidizing conditions two disulfide bonds are formed involving the reactive cysteines. Under reducing conditions zinc is bound to the reactive cysteines and the protein is inactive.

The protein resides in the cytoplasm. Functionally, redox regulated molecular chaperone. Protects both thermally unfolding and oxidatively damaged proteins from irreversible aggregation. Plays an important role in the bacterial defense system toward oxidative stress. The chain is 33 kDa chaperonin from Shewanella loihica (strain ATCC BAA-1088 / PV-4).